Reading from the N-terminus, the 135-residue chain is Protein PsiE homolog (135 aa).

The next 4 helical transmembrane spans lie at 13–33 (VLQW…VIFL), 54–74 (YMLV…ALIV), 82–102 (HFPL…LIIV), and 107–127 (PNDT…LYLA).

The protein belongs to the PsiE family.

It localises to the cell inner membrane. The polypeptide is Protein PsiE homolog (Edwardsiella ictaluri (strain 93-146)).